The primary structure comprises 1755 residues: Transposon Ty1-GR2 Gag-Pol polyprotein (1755 aa).

Over residues 1 to 16 (MESQQLSQHSHISHGS) the composition is skewed to low complexity. 3 disordered regions span residues 1–93 (MESQ…MMTQ), 126–173 (PQSQ…RPPP), and 352–421 (GSRN…SKST). 2 stretches are compositionally biased toward polar residues: residues 48–60 (TKAN…TPAS) and 127–152 (QSQF…GNTF). Over residues 153–165 (TDSSSADSDMTST) the composition is skewed to low complexity. The RNA-binding stretch occupies residues 299–401 (NNGIHINNKV…NSKSKTARAH (103 aa)). Residues 402 to 418 (NVSTSNNSPSTDNDSIS) show a composition bias toward low complexity. Phosphoserine is present on serine 416. Aspartate 461 serves as the catalytic For protease activity; shared with dimeric partner. The segment at 583–640 (NVHTSESTRKYPYPFIHRMLAHANAQTIRYSLKNNTITYFNESDVDWSSAIDYQCPDC) is integrase-type zinc finger-like. The 176-residue stretch at 660–835 (NSYEPFQYLH…AGLDISTLLP (176 aa)) folds into the Integrase catalytic domain. Mg(2+) contacts are provided by aspartate 671 and aspartate 736. Disordered regions lie at residues 956–1087 (SKAV…ETEK), 1092–1111 (RSPS…NIVP), and 1130–1187 (DLPL…DNET). Positions 960–969 (SPTDSTPPST) are enriched in low complexity. Polar residues predominate over residues 1005–1015 (STPQISNIEST). Over residues 1038–1053 (ESSHASKSKDFRHSDS) the composition is skewed to basic and acidic residues. Polar residues-rich tracts occupy residues 1054-1082 (YSEN…QISD) and 1101-1111 (PENNSSHNIVP). The Bipartite nuclear localization signal motif lies at 1178–1212 (KKRSLEDNETEIKVSRDTWNTKNMRSLEPPRSKKR). The 139-residue stretch at 1338 to 1476 (NNYYITQLDI…DILGLEIKYQ (139 aa)) folds into the Reverse transcriptase Ty1/copia-type domain. 6 residues coordinate Mg(2+): aspartate 1346, aspartate 1427, aspartate 1428, aspartate 1610, glutamate 1652, and aspartate 1685. Positions 1610-1752 (DASYGNQPYY…IKTFKLLTNK (143 aa)) constitute an RNase H Ty1/copia-type domain.

As to quaternary structure, the capsid protein forms a homotrimer, from which the VLPs are assembled. The protease is a homodimer, whose active site consists of two apposed aspartic acid residues. Post-translationally, initially, virus-like particles (VLPs) are composed of the structural unprocessed proteins Gag and Gag-Pol, and also contain the host initiator methionine tRNA (tRNA(i)-Met) which serves as a primer for minus-strand DNA synthesis, and a dimer of genomic Ty RNA. Processing of the polyproteins occurs within the particle and proceeds by an ordered pathway, called maturation. First, the protease (PR) is released by autocatalytic cleavage of the Gag-Pol polyprotein yielding capsid protein p45 and a Pol-p154 precursor protein. This cleavage is a prerequisite for subsequent processing of Pol-p154 at the remaining sites to release the mature structural and catalytic proteins. Maturation takes place prior to the RT reaction and is required to produce transposition-competent VLPs.

It localises to the cytoplasm. It is found in the nucleus. It carries out the reaction DNA(n) + a 2'-deoxyribonucleoside 5'-triphosphate = DNA(n+1) + diphosphate. It catalyses the reaction Endonucleolytic cleavage to 5'-phosphomonoester.. Capsid protein (CA) is the structural component of the virus-like particle (VLP), forming the shell that encapsulates the retrotransposons dimeric RNA genome. The particles are assembled from trimer-clustered units and there are holes in the capsid shells that allow for the diffusion of macromolecules. CA also has nucleocapsid-like chaperone activity, promoting primer tRNA(i)-Met annealing to the multipartite primer-binding site (PBS), dimerization of Ty1 RNA and initiation of reverse transcription. Its function is as follows. The aspartyl protease (PR) mediates the proteolytic cleavages of the Gag and Gag-Pol polyproteins after assembly of the VLP. Functionally, reverse transcriptase/ribonuclease H (RT) is a multifunctional enzyme that catalyzes the conversion of the retro-elements RNA genome into dsDNA within the VLP. The enzyme displays a DNA polymerase activity that can copy either DNA or RNA templates, and a ribonuclease H (RNase H) activity that cleaves the RNA strand of RNA-DNA heteroduplexes during plus-strand synthesis and hydrolyzes RNA primers. The conversion leads to a linear dsDNA copy of the retrotransposon that includes long terminal repeats (LTRs) at both ends. In terms of biological role, integrase (IN) targets the VLP to the nucleus, where a subparticle preintegration complex (PIC) containing at least integrase and the newly synthesized dsDNA copy of the retrotransposon must transit the nuclear membrane. Once in the nucleus, integrase performs the integration of the dsDNA into the host genome. This is Transposon Ty1-GR2 Gag-Pol polyprotein (TY1B-GR2) from Saccharomyces cerevisiae (strain ATCC 204508 / S288c) (Baker's yeast).